Here is a 162-residue protein sequence, read N- to C-terminus: Nucleotide-binding protein SGR_2909 (162 aa).

The protein belongs to the YajQ family.

Nucleotide-binding protein. The sequence is that of Nucleotide-binding protein SGR_2909 from Streptomyces griseus subsp. griseus (strain JCM 4626 / CBS 651.72 / NBRC 13350 / KCC S-0626 / ISP 5235).